The primary structure comprises 463 residues: Carnosine N-methyltransferase (463 aa).

Disordered regions lie at residues 1-64 (MTKN…SQLK) and 79-104 (KHNHDHSHDHNHDYDDNNEDDEEKEE). Positions 9–58 (KSNNSNISNNNNNNNNNNNNNNNNNNNNNNNNNNNNNNNNNNNNNNNNKN) are enriched in low complexity. Residues 79–93 (KHNHDHSHDHNHDYD) are compositionally biased toward basic and acidic residues. Residues 94-103 (DNNEDDEEKE) are compositionally biased toward acidic residues. Gln-215, Arg-218, Gly-260, Glu-281, Asp-351, Phe-352, and Cys-367 together coordinate S-adenosyl-L-methionine. Asp-371 serves as a coordination point for carnosine. Tyr-379 contacts S-adenosyl-L-methionine. Carnosine-binding residues include His-402 and Tyr-450.

It belongs to the carnosine N-methyltransferase family.

The enzyme catalyses carnosine + S-adenosyl-L-methionine = anserine + S-adenosyl-L-homocysteine + H(+). In terms of biological role, N-methyltransferase that mediates the formation of anserine (beta-alanyl-N(Pi)-methyl-L-histidine) from carnosine. The polypeptide is Carnosine N-methyltransferase (Dictyostelium discoideum (Social amoeba)).